The sequence spans 268 residues: Ribosomal RNA small subunit methyltransferase A (268 aa).

S-adenosyl-L-methionine contacts are provided by N10, I12, G37, E58, D83, and N107.

The protein belongs to the class I-like SAM-binding methyltransferase superfamily. rRNA adenine N(6)-methyltransferase family. RsmA subfamily.

The protein resides in the cytoplasm. It carries out the reaction adenosine(1518)/adenosine(1519) in 16S rRNA + 4 S-adenosyl-L-methionine = N(6)-dimethyladenosine(1518)/N(6)-dimethyladenosine(1519) in 16S rRNA + 4 S-adenosyl-L-homocysteine + 4 H(+). Specifically dimethylates two adjacent adenosines (A1518 and A1519) in the loop of a conserved hairpin near the 3'-end of 16S rRNA in the 30S particle. May play a critical role in biogenesis of 30S subunits. The chain is Ribosomal RNA small subunit methyltransferase A from Caldanaerobacter subterraneus subsp. tengcongensis (strain DSM 15242 / JCM 11007 / NBRC 100824 / MB4) (Thermoanaerobacter tengcongensis).